The primary structure comprises 264 residues: Thymidylate synthase (264 aa).

Arg21 is a dUMP binding site. His51 serves as a coordination point for (6R)-5,10-methylene-5,6,7,8-tetrahydrofolate. Arg126–Arg127 is a binding site for dUMP. Catalysis depends on Cys146, which acts as the Nucleophile. Residues Arg166–Asp169, Asn177, and His207–Tyr209 contribute to the dUMP site. Asp169 contacts (6R)-5,10-methylene-5,6,7,8-tetrahydrofolate. Residue Ala263 participates in (6R)-5,10-methylene-5,6,7,8-tetrahydrofolate binding.

Belongs to the thymidylate synthase family. Bacterial-type ThyA subfamily. Homodimer.

Its subcellular location is the cytoplasm. It carries out the reaction dUMP + (6R)-5,10-methylene-5,6,7,8-tetrahydrofolate = 7,8-dihydrofolate + dTMP. It functions in the pathway pyrimidine metabolism; dTTP biosynthesis. Catalyzes the reductive methylation of 2'-deoxyuridine-5'-monophosphate (dUMP) to 2'-deoxythymidine-5'-monophosphate (dTMP) while utilizing 5,10-methylenetetrahydrofolate (mTHF) as the methyl donor and reductant in the reaction, yielding dihydrofolate (DHF) as a by-product. This enzymatic reaction provides an intracellular de novo source of dTMP, an essential precursor for DNA biosynthesis. In Hahella chejuensis (strain KCTC 2396), this protein is Thymidylate synthase.